The chain runs to 358 residues: Protein SRG1 (358 aa).

The 101-residue stretch at 209-309 (SVQSMRMNYY…RLSIATFHNV (101 aa)) folds into the Fe2OG dioxygenase domain. Fe cation is bound by residues His233, Asp235, and His290.

This sequence belongs to the iron/ascorbate-dependent oxidoreductase family. Low expression in roots and leaves.

In Arabidopsis thaliana (Mouse-ear cress), this protein is Protein SRG1 (SRG1).